We begin with the raw amino-acid sequence, 139 residues long: Small ribosomal subunit protein uS11 (139 aa).

A disordered region spans residues 118–139 (EDVTPIPHDGTRPKGGRRGRRV).

This sequence belongs to the universal ribosomal protein uS11 family. Part of the 30S ribosomal subunit.

In terms of biological role, located on the platform of the 30S subunit. This is Small ribosomal subunit protein uS11 from Thermococcus sibiricus (strain DSM 12597 / MM 739).